A 687-amino-acid polypeptide reads, in one-letter code: Glycine--tRNA ligase beta subunit (687 aa).

Belongs to the class-II aminoacyl-tRNA synthetase family. As to quaternary structure, tetramer of two alpha and two beta subunits.

It localises to the cytoplasm. It catalyses the reaction tRNA(Gly) + glycine + ATP = glycyl-tRNA(Gly) + AMP + diphosphate. This is Glycine--tRNA ligase beta subunit from Neisseria meningitidis serogroup B (strain ATCC BAA-335 / MC58).